Here is a 420-residue protein sequence, read N- to C-terminus: Gamma-glutamyl phosphate reductase (420 aa).

Belongs to the gamma-glutamyl phosphate reductase family.

The protein localises to the cytoplasm. It catalyses the reaction L-glutamate 5-semialdehyde + phosphate + NADP(+) = L-glutamyl 5-phosphate + NADPH + H(+). Its pathway is amino-acid biosynthesis; L-proline biosynthesis; L-glutamate 5-semialdehyde from L-glutamate: step 2/2. Its function is as follows. Catalyzes the NADPH-dependent reduction of L-glutamate 5-phosphate into L-glutamate 5-semialdehyde and phosphate. The product spontaneously undergoes cyclization to form 1-pyrroline-5-carboxylate. This is Gamma-glutamyl phosphate reductase from Chlorobaculum parvum (strain DSM 263 / NCIMB 8327) (Chlorobium vibrioforme subsp. thiosulfatophilum).